The sequence spans 162 residues: Ribosome maturation factor RimM (162 aa).

Residues 86–160 (EGRYYYFALI…SIHVDPIPGL (75 aa)) enclose the PRC barrel domain.

The protein belongs to the RimM family. As to quaternary structure, binds ribosomal protein uS19.

The protein resides in the cytoplasm. Functionally, an accessory protein needed during the final step in the assembly of 30S ribosomal subunit, possibly for assembly of the head region. Essential for efficient processing of 16S rRNA. May be needed both before and after RbfA during the maturation of 16S rRNA. It has affinity for free ribosomal 30S subunits but not for 70S ribosomes. The protein is Ribosome maturation factor RimM of Thermus thermophilus (strain ATCC 27634 / DSM 579 / HB8).